The primary structure comprises 302 residues: Beta-casein (302 aa).

The first 15 residues, 1-15 (MKLLILTCLVALGFA), serve as a signal peptide directing secretion. Phosphoserine is present on residues serine 23 and serine 25. A run of 16 repeats spans residues 144 to 151 (KREMLPIY), 152 to 159 (ERERLPAH), 160 to 167 (KRESLLAH), 168 to 175 (ERESLLAH), 176 to 182 (ERDILVP), 183 to 190 (QREMSFVP), 191 to 198 (EREFLFAS), 199 to 204 (ERVVLP), 205 to 214 (EQEKEILHND), 215 to 222 (EREVLAVH), 223 to 230 (KKEILPPF), 231 to 238 (EKEKVLPL), 241 to 247 (HRVVPLP), 248 to 255 (QREIVPPF), 256 to 262 (QRETLLP), and 263 to 269 (EEILPVN). The interval 144–269 (KREMLPIYER…LLPEEILPVN (126 aa)) is 16 X approximate tandem repeats.

It belongs to the beta-casein family. In terms of tissue distribution, mammary gland specific. Secreted in milk.

It localises to the secreted. Its function is as follows. Important role in determination of the surface properties of the casein micelles. The polypeptide is Beta-casein (CSN2) (Notamacropus eugenii (Tammar wallaby)).